The following is a 405-amino-acid chain: Saccharopepsin (405 aa).

Residues 1–22 (MFSLKALLPLALLLVSANQVAA) form the signal peptide. The propeptide at 23-76 (KVHKAKIYKHELSDEMKEVTFEQHLAHLGQKYLTQFEKANPEVVFSREHPFFTE) is activation peptide. The Peptidase A1 domain maps to 91–402 (YYTDITLGTP…DLGNNAVGLA (312 aa)). The active site involves Asp-109. Cys-122 and Cys-127 are disulfide-bonded. Residue Asn-144 is glycosylated (N-linked (GlcNAc...) asparagine). Asp-294 is a catalytic residue. Cys-328 and Cys-361 form a disulfide bridge. An N-linked (GlcNAc...) asparagine glycan is attached at Asn-345.

It belongs to the peptidase A1 family.

The protein localises to the vacuole. It carries out the reaction Hydrolysis of proteins with broad specificity for peptide bonds. Cleaves -Leu-Leu-|-Val-Tyr- bond in a synthetic substrate. Does not act on esters of Tyr or Arg.. In terms of biological role, aspartyl protease implicated in the post-translational regulation of S.cerevisiae vacuolar proteinases. Acts on YSCB, on YSCY and on itself. The sequence is that of Saccharopepsin (PEP4) from Saccharomyces cerevisiae (strain ATCC 204508 / S288c) (Baker's yeast).